Here is an 856-residue protein sequence, read N- to C-terminus: Rod cGMP-specific 3',5'-cyclic phosphodiesterase subunit beta (856 aa).

Ser2 carries the N-acetylserine modification. GAF domains are found at residues 71-220 (NMER…TLNL) and 252-429 (DIER…GWSV). Positions 481–814 (EEDELGKILK…KEWKALADEY (334 aa)) constitute a PDEase domain. His557 functions as the Proton donor in the catalytic mechanism. A divalent metal cation is bound by residues His561, His597, Asp598, and Asp718. The S-geranylgeranyl cysteine moiety is linked to residue Cys853. A propeptide spans 854-856 (CIL) (removed in mature form).

The protein belongs to the cyclic nucleotide phosphodiesterase family. In terms of assembly, oligomer composed of two catalytic chains (alpha and beta), an inhibitory chain (gamma) and the delta chain. The cofactor is a divalent metal cation.

The protein localises to the membrane. The protein resides in the cell projection. It is found in the cilium. It localises to the photoreceptor outer segment. It catalyses the reaction 3',5'-cyclic GMP + H2O = GMP + H(+). Functionally, rod-specific cGMP phosphodiesterase that catalyzes the hydrolysis of 3',5'-cyclic GMP. Necessary for the formation of a functional phosphodiesterase holoenzyme. Involved in retinal circadian rhythm photoentrainment via modulation of UVA and orange light-induced phase-shift of the retina clock. May participate in processes of transmission and amplification of the visual signal. This chain is Rod cGMP-specific 3',5'-cyclic phosphodiesterase subunit beta, found in Mus musculus (Mouse).